The primary structure comprises 364 residues: Uroporphyrinogen decarboxylase (364 aa).

Substrate contacts are provided by residues 49-53 (RQAGR), D98, Y173, S228, and H341.

The protein belongs to the uroporphyrinogen decarboxylase family. Homodimer.

It is found in the cytoplasm. It catalyses the reaction uroporphyrinogen III + 4 H(+) = coproporphyrinogen III + 4 CO2. The protein operates within porphyrin-containing compound metabolism; protoporphyrin-IX biosynthesis; coproporphyrinogen-III from 5-aminolevulinate: step 4/4. Functionally, catalyzes the decarboxylation of four acetate groups of uroporphyrinogen-III to yield coproporphyrinogen-III. The sequence is that of Uroporphyrinogen decarboxylase from Protochlamydia amoebophila (strain UWE25).